Reading from the N-terminus, the 226-residue chain is PKHD-type hydroxylase Bind_0236 (226 aa).

Positions 78-178 (TIFPPLFNRY…RIASFFWIQS (101 aa)) constitute a Fe2OG dioxygenase domain. Fe cation is bound by residues His-96, Asp-98, and His-159. Residue Arg-169 participates in 2-oxoglutarate binding.

Fe(2+) is required as a cofactor. Requires L-ascorbate as cofactor.

This chain is PKHD-type hydroxylase Bind_0236, found in Beijerinckia indica subsp. indica (strain ATCC 9039 / DSM 1715 / NCIMB 8712).